The following is a 168-amino-acid chain: MAILNILEFPDPRLRTIAKPVEVVDDAVRQLIDDMFETMYEAPGIGLAATQVNVHKRIVVMDLSEDKSEPRVFINPEFEPLTEDMDQYQEGCLSVPGFYENVDRPQKVRIKALDRDGNPFEEVAEGLLAVCIQHECDHLNGKLFVDYLSTLKRDRIRKKLEKQHRQQA.

Fe cation contacts are provided by cysteine 92 and histidine 134. Residue glutamate 135 is part of the active site. Histidine 138 is a binding site for Fe cation.

Belongs to the polypeptide deformylase family. It depends on Fe(2+) as a cofactor.

The catalysed reaction is N-terminal N-formyl-L-methionyl-[peptide] + H2O = N-terminal L-methionyl-[peptide] + formate. In terms of biological role, removes the formyl group from the N-terminal Met of newly synthesized proteins. Requires at least a dipeptide for an efficient rate of reaction. N-terminal L-methionine is a prerequisite for activity but the enzyme has broad specificity at other positions. The polypeptide is Peptide deformylase (Pseudomonas aeruginosa (strain ATCC 15692 / DSM 22644 / CIP 104116 / JCM 14847 / LMG 12228 / 1C / PRS 101 / PAO1)).